We begin with the raw amino-acid sequence, 145 residues long: MNPAHLLVLLAVCVSLLGAANIPPQPLNLLQFKNMIQCAGSRLWVAYVKYGCYCGPGGTGTPLDQLDRCCQTHDHCYDNAKKFGNCIPYFKTYEYTCNKPDITCTDAKGSCGRTVCDCDRAAAICFAAAPYNLANFGIDKEKHCQ.

The N-terminal stretch at 1-19 is a signal peptide; the sequence is MNPAHLLVLLAVCVSLLGA. Residues 20-27 constitute a propeptide that is removed on maturation; it reads ANIPPQPL. Cystine bridges form between Cys38–Cys97, Cys52–Cys144, Cys54–Cys70, Cys69–Cys125, Cys76–Cys118, Cys86–Cys111, and Cys104–Cys116. Tyr53, Gly55, and Gly57 together coordinate Ca(2+). The active site involves His73. Asp74 lines the Ca(2+) pocket. Residue Asp119 is part of the active site.

It depends on Ca(2+) as a cofactor. As to expression, expressed by the venom gland.

It is found in the secreted. It carries out the reaction a 1,2-diacyl-sn-glycero-3-phosphocholine + H2O = a 1-acyl-sn-glycero-3-phosphocholine + a fatty acid + H(+). Functionally, snake venom phospholipase A2 (PLA2) that has only a weak enzymatic activity. Inhibits neuromuscular transmission by blocking acetylcholine release from the nerve termini. PLA2 catalyzes the calcium-dependent hydrolysis of the 2-acyl groups in 3-sn-phosphoglycerides. The sequence is that of Basic phospholipase A2 Vb-2 from Bungarus fasciatus (Banded krait).